The sequence spans 138 residues: ATP synthase epsilon chain (138 aa).

Belongs to the ATPase epsilon chain family. F-type ATPases have 2 components, CF(1) - the catalytic core - and CF(0) - the membrane proton channel. CF(1) has five subunits: alpha(3), beta(3), gamma(1), delta(1), epsilon(1). CF(0) has three main subunits: a, b and c.

It localises to the cell membrane. Produces ATP from ADP in the presence of a proton gradient across the membrane. The chain is ATP synthase epsilon chain (atpC) from Streptococcus mutans serotype c (strain ATCC 700610 / UA159).